Consider the following 229-residue polypeptide: Golgi to ER traffic protein 1 (229 aa).

Topologically, residues 1 to 14 (MGILAALDLHPYTL) are lumenal. The helical transmembrane segment at 15-34 (VVSSFTVLLIQQLVGFIGKS) threads the bilayer. Topologically, residues 35–122 (TIQEFAWLFY…KINSLVGVVL (88 aa)) are cytoplasmic. The stretch at 60–117 (HTKKQEELHKLNREKRSISAQDEYAKWTKLNRQAEKLTAEVKSLSDDIAKDKSKINSL) forms a coiled coil. Residues 123–143 (LFLTTLPLWVFRLWFRKSVLF) traverse the membrane as a helical segment. Topologically, residues 144 to 167 (YLPTGVFPYYVERVLAIPFFASGS) are lumenal. The helical transmembrane segment at 168–184 (VGLTVWMFAVNNVISSV) threads the bilayer. At 185–229 (LFLLTFPFKPSVPIPIRQTKVEEVVPESAESKESSPEVIDIADAN) the chain is on the cytoplasmic side. Positions 210-219 (PESAESKESS) are enriched in basic and acidic residues. The tract at residues 210–229 (PESAESKESSPEVIDIADAN) is disordered.

Belongs to the WRB/GET1 family. As to quaternary structure, component of the Golgi to ER traffic (GET) complex, which is composed of GET1, GET2 and GET3. Within the complex, GET1 and GET2 form a heterotetramer which is stabilized by phosphatidylinositol binding and which binds to the GET3 homodimer.

It localises to the endoplasmic reticulum membrane. The protein resides in the golgi apparatus membrane. Required for the post-translational delivery of tail-anchored (TA) proteins to the endoplasmic reticulum. Together with GET2, acts as a membrane receptor for soluble GET3, which recognizes and selectively binds the transmembrane domain of TA proteins in the cytosol. The GET complex cooperates with the HDEL receptor ERD2 to mediate the ATP-dependent retrieval of resident ER proteins that contain a C-terminal H-D-E-L retention signal from the Golgi to the ER. This is Golgi to ER traffic protein 1 from Scheffersomyces stipitis (strain ATCC 58785 / CBS 6054 / NBRC 10063 / NRRL Y-11545) (Yeast).